A 473-amino-acid polypeptide reads, in one-letter code: Thermostable beta-glucosidase B (473 aa).

Glu-196 acts as the Proton donor in catalysis. Glu-378 (nucleophile) is an active-site residue.

The protein belongs to the glycosyl hydrolase 1 family.

The protein resides in the cytoplasm. It catalyses the reaction Hydrolysis of terminal, non-reducing beta-D-glucosyl residues with release of beta-D-glucose.. The sequence is that of Thermostable beta-glucosidase B (bglB) from Thermobispora bispora (Microbispora bispora).